Here is a 495-residue protein sequence, read N- to C-terminus: Tyrosine 3-monooxygenase (495 aa).

Ser19 carries the post-translational modification Phosphoserine; by CaMK2. Ser31 carries the phosphoserine modification. At Ser40 the chain carries Phosphoserine; by CaMK2 and PKA. The segment covering Leu41–Glu53 has biased composition (basic and acidic residues). Residues Leu41–Leu65 are disordered. Residues His328, His333, and Glu373 each coordinate Fe cation. Phosphoserine is present on Ser469.

It belongs to the biopterin-dependent aromatic amino acid hydroxylase family. As to quaternary structure, homotetramer. Interacts (when phosphorylated at Ser-19) with YWHAG; one YWHAG dimer bounds to one TH tetramer this interaction may influence the phosphorylation and dephosphorylation of other sites. It depends on Fe(2+) as a cofactor. Phosphorylated on Ser-19, Ser-31 and Ser-40 by several protein kinases with different site specificities. Phosphorylation at Ser-31 and Ser-40 leads to an increase of TH activity. Phosphorylation at Ser-40 activates the enzyme and also counteracts the feedback inhibition of TH by catecholamines. Phosphorylation of Ser-19 and Ser-31 triggers the proteasomal degradation of TH through the ubiquitin-proteasome pathway. Phosphorylation at Ser-31 facilitates transport of TH from the soma to the nerve terminals via the microtubule network. Phosphorylation at Ser-19 induces the high-affinity binding to the 14-3-3 protein YWHAG; this interaction may influence the phosphorylation and dephosphorylation of other sites. Ser-19 increases the phosphorylation at Ser-40 in a hierarchical manner, leading to increased activity.

The protein resides in the cytoplasm. The protein localises to the perinuclear region. It localises to the nucleus. It is found in the cell projection. Its subcellular location is the axon. The protein resides in the cytoplasmic vesicle. The protein localises to the secretory vesicle. It localises to the synaptic vesicle. It carries out the reaction (6R)-L-erythro-5,6,7,8-tetrahydrobiopterin + L-tyrosine + O2 = (4aS,6R)-4a-hydroxy-L-erythro-5,6,7,8-tetrahydrobiopterin + L-dopa. It participates in catecholamine biosynthesis; dopamine biosynthesis; dopamine from L-tyrosine: step 1/2. With respect to regulation, inhibited in feedback fashion by the catecholamine neurotransmitters, especially by dopamine in competition with tetrahydrobiopterin. Phosphorylation of several Ser/Thr residues in the N-terminus regulates the catalytic activity. Ser-31 and Ser-40 are readily phosphorylated to activate the catalytic activity. A Cysteine modification induced by N-ethylmaleimide (NEM), inhibits tyrosine 3-monooxygenase activity through the modification of the Cys-174. In terms of biological role, catalyzes the conversion of L-tyrosine to L-dihydroxyphenylalanine (L-Dopa), the rate-limiting step in the biosynthesis of cathecolamines, dopamine, noradrenaline, and adrenaline. Uses tetrahydrobiopterin and molecular oxygen to convert tyrosine to L-Dopa. In addition to tyrosine, is able to catalyze the hydroxylation of phenylalanine and tryptophan with lower specificity. Positively regulates the regression of retinal hyaloid vessels during postnatal development. This Canis lupus familiaris (Dog) protein is Tyrosine 3-monooxygenase (TH).